Reading from the N-terminus, the 176-residue chain is dCTP deaminase (176 aa).

DCTP-binding positions include 99–104 (RSTLAR) and Asp-115. Glu-125 functions as the Proton donor/acceptor in the catalytic mechanism. Position 163 (Gln-163) interacts with dCTP.

It belongs to the dCTP deaminase family. As to quaternary structure, homotrimer.

It catalyses the reaction dCTP + H2O + H(+) = dUTP + NH4(+). Its pathway is pyrimidine metabolism; dUMP biosynthesis; dUMP from dCTP (dUTP route): step 1/2. Catalyzes the deamination of dCTP to dUTP. The protein is dCTP deaminase of Pyrobaculum neutrophilum (strain DSM 2338 / JCM 9278 / NBRC 100436 / V24Sta) (Thermoproteus neutrophilus).